The sequence spans 495 residues: NAD(+)--protein-arginine ADP-ribosyltransferase Tre1 (495 aa).

The disordered stretch occupies residues 278 to 309 (PDLQIKGPTPVKKPEPLQPARQPEKASAPKPV). In terms of domain architecture, TR mART core spans 315-495 (MSLREAVGNQ…VTQFILKEIP (181 aa)). Positions 344–495 (RSALLTDDQI…VTQFILKEIP (152 aa)) are ART domain. Residues Arg-406, Ser-431, and Glu-466 contribute to the active site.

This sequence belongs to the Arg-specific ADP-ribosyltransferase family.

It is found in the secreted. It localises to the host cytoplasm. The enzyme catalyses L-arginyl-[protein] + NAD(+) = N(omega)-(ADP-D-ribosyl)-L-arginyl-[protein] + nicotinamide + H(+). In terms of biological role, toxic component of a contact-dependent interbacterial competition system (also called effector-immunity systems). Acts by ADP-ribosylating a number of target proteins in target cells; E.coli target proteins include FtsZ, EFTu, RNase E, Fis, YegQ, GuaB and IF2. The polypeptide is NAD(+)--protein-arginine ADP-ribosyltransferase Tre1 (Pseudomonas putida (strain GB-1)).